The chain runs to 500 residues: Protein shisa-6 (500 aa).

The signal sequence occupies residues 1-25 (MALRRLLLLLLLSLESLDLLPSVHG). Residues 26–174 (ARGRAANRTL…NKYDPEKDKT (149 aa)) lie on the Extracellular side of the membrane. 2 N-linked (GlcNAc...) asparagine glycosylation sites follow: N32 and N59. Positions 52-73 (ARGGRELNGTARAPGIPEAGSR) are disordered. The chain crosses the membrane as a helical span at residues 175-195 (NFTVYITCGVIAFVIVAGVFA). Over 196–500 (KVSYDKAHRP…YTASKTEVTV (305 aa)) the chain is Cytoplasmic. Residues 240 to 255 (TSPKENTPVRSSSKNH) show a composition bias toward polar residues. 2 disordered regions span residues 240 to 269 (TSPK…PEKP) and 349 to 378 (SQQK…DRGL). Residues S391, S397, and S409 each carry the phosphoserine modification. Position 433 is a phosphothreonine (T433). Positions 444–470 (MHSHPSASNNSYATLGQSQTAAKRHAF) are disordered. Residues 448 to 464 (PSASNNSYATLGQSQTA) show a composition bias toward polar residues. T477 bears the Phosphothreonine mark. Residues 497 to 500 (EVTV) carry the PDZ-binding motif.

This sequence belongs to the shisa family. Component of the postsynaptic hippocampal AMPA-type glutamate receptor (AMPAR) complex, at least composed of pore forming AMPAR subunits GRIA1, GRIA2 and GRIA3 and AMPAR auxiliary proteins SHISA6 and SHISA7. Interacts (via PDZ-binding motif) with DLG4/PSD-95 (via PDZ domain); the interaction is direct. As to expression, expressed in the developing ventral mesencephalon.

Its subcellular location is the membrane. It is found in the postsynaptic density. Functionally, involved in maintenance of high-frequency synaptic transmission at hippocampal CA3-CA1 synapses. Regulates AMPA-type glutamate receptor (AMPAR) immobilization at postsynaptic density keeping the channels in an activated state in the presence of glutamate and preventing synaptic depression. May play a role in self-renewal and differentiation of spermatogonial stem cells by inhibiting canonical Wnt signaling pathway. This chain is Protein shisa-6, found in Homo sapiens (Human).